The sequence spans 441 residues: ATP-dependent protease ATPase subunit HslU (441 aa).

ATP-binding positions include Ile-18, 60–65 (GVGKTE), Asp-254, Glu-319, and Arg-391.

This sequence belongs to the ClpX chaperone family. HslU subfamily. In terms of assembly, a double ring-shaped homohexamer of HslV is capped on each side by a ring-shaped HslU homohexamer. The assembly of the HslU/HslV complex is dependent on binding of ATP.

The protein localises to the cytoplasm. In terms of biological role, ATPase subunit of a proteasome-like degradation complex; this subunit has chaperone activity. The binding of ATP and its subsequent hydrolysis by HslU are essential for unfolding of protein substrates subsequently hydrolyzed by HslV. HslU recognizes the N-terminal part of its protein substrates and unfolds these before they are guided to HslV for hydrolysis. In Shewanella loihica (strain ATCC BAA-1088 / PV-4), this protein is ATP-dependent protease ATPase subunit HslU.